A 199-amino-acid polypeptide reads, in one-letter code: Pyridoxal 5'-phosphate synthase subunit PdxT (199 aa).

Residue 52–54 (GES) participates in L-glutamine binding. The Nucleophile role is filled by Cys84. L-glutamine is bound by residues Arg115 and 143–144 (IR). Catalysis depends on charge relay system residues His179 and Glu181.

Belongs to the glutaminase PdxT/SNO family. In terms of assembly, in the presence of PdxS, forms a dodecamer of heterodimers. Only shows activity in the heterodimer.

It carries out the reaction aldehydo-D-ribose 5-phosphate + D-glyceraldehyde 3-phosphate + L-glutamine = pyridoxal 5'-phosphate + L-glutamate + phosphate + 3 H2O + H(+). The catalysed reaction is L-glutamine + H2O = L-glutamate + NH4(+). The protein operates within cofactor biosynthesis; pyridoxal 5'-phosphate biosynthesis. Functionally, catalyzes the hydrolysis of glutamine to glutamate and ammonia as part of the biosynthesis of pyridoxal 5'-phosphate. The resulting ammonia molecule is channeled to the active site of PdxS. The sequence is that of Pyridoxal 5'-phosphate synthase subunit PdxT from Methanosarcina acetivorans (strain ATCC 35395 / DSM 2834 / JCM 12185 / C2A).